The sequence spans 638 residues: Probable beta-glucosidase C (638 aa).

A signal peptide spans 1-18 (MKVLAPGYLAEASLTALA). 5 N-linked (GlcNAc...) asparagine glycosylation sites follow: N40, N94, N116, N223, and N274. D341 is a catalytic residue. 4 N-linked (GlcNAc...) asparagine glycosylation sites follow: N364, N480, N488, and N528.

Belongs to the glycosyl hydrolase 3 family.

It is found in the secreted. The catalysed reaction is Hydrolysis of terminal, non-reducing beta-D-glucosyl residues with release of beta-D-glucose.. It functions in the pathway glycan metabolism; cellulose degradation. In terms of biological role, beta-glucosidases are one of a number of cellulolytic enzymes involved in the degradation of cellulosic biomass. Catalyzes the last step releasing glucose from the inhibitory cellobiose. This is Probable beta-glucosidase C (bglC) from Aspergillus oryzae (strain ATCC 42149 / RIB 40) (Yellow koji mold).